The following is a 398-amino-acid chain: Phosphoglycerate kinase (398 aa).

Substrate-binding positions include 21-23, arginine 36, 59-62, arginine 119, and arginine 157; these read DFN and HLGR. Residues lysine 208, glycine 296, glutamate 327, and 354-357 contribute to the ATP site; that span reads GGDS.

This sequence belongs to the phosphoglycerate kinase family. Monomer.

The protein resides in the cytoplasm. It carries out the reaction (2R)-3-phosphoglycerate + ATP = (2R)-3-phospho-glyceroyl phosphate + ADP. Its pathway is carbohydrate degradation; glycolysis; pyruvate from D-glyceraldehyde 3-phosphate: step 2/5. The protein is Phosphoglycerate kinase of Streptococcus pneumoniae serotype 4 (strain ATCC BAA-334 / TIGR4).